The sequence spans 394 residues: Phosphoglycerate kinase (394 aa).

Substrate-binding positions include 21-23 (DFN), Arg-36, 59-62 (HLGR), Arg-118, and Arg-151. Ser-183 carries the phosphoserine modification. ATP is bound at residue Lys-201. Thr-299 carries the phosphothreonine modification. ATP contacts are provided by residues Glu-323 and 350–353 (GGDS).

It belongs to the phosphoglycerate kinase family. As to quaternary structure, monomer.

The protein resides in the cytoplasm. The catalysed reaction is (2R)-3-phosphoglycerate + ATP = (2R)-3-phospho-glyceroyl phosphate + ADP. Its pathway is carbohydrate degradation; glycolysis; pyruvate from D-glyceraldehyde 3-phosphate: step 2/5. The protein is Phosphoglycerate kinase of Geobacillus kaustophilus (strain HTA426).